The following is a 198-amino-acid chain: Peroxiredoxin-2 (198 aa).

At A2 the chain carries N-acetylalanine. Residues 6-164 enclose the Thioredoxin domain; sequence AQIGKSAPDF…ALRLVQAFQY (159 aa). Residue S11 is modified to Phosphoserine. The active-site Cysteine sulfenic acid (-SOH) intermediate is the C51. S112 bears the Phosphoserine mark. T182 is modified (phosphothreonine). The residue at position 196 (K196) is an N6-acetyllysine.

It belongs to the peroxiredoxin family. AhpC/Prx1 subfamily. In terms of assembly, homodimer; disulfide-linked, upon oxidation. 5 homodimers assemble to form a ring-like decamer. Interacts with TIPIN. Post-translationally, the enzyme can be inactivated by further oxidation of the cysteine sulfenic acid (C(P)-SOH) to sulphinic acid (C(P)-SO2H) instead of its condensation to a disulfide bond. It can be reactivated by forming a transient disulfide bond with sulfiredoxin SRXN1, which reduces the cysteine sulfinic acid in an ATP- and Mg-dependent manner. Acetylation increases resistance to transition to high molecular-mass complexes. Deacetylated by HDAC6 which decreases reducing activity. Widely expressed with highest levels in bone marrow. High levels also found in heart, brain, kidney and skeletal muscle. Lower levels in liver, lung and thymus.

Its subcellular location is the cytoplasm. The catalysed reaction is a hydroperoxide + [thioredoxin]-dithiol = an alcohol + [thioredoxin]-disulfide + H2O. Thiol-specific peroxidase that catalyzes the reduction of hydrogen peroxide and organic hydroperoxides to water and alcohols, respectively. Plays a role in cell protection against oxidative stress by detoxifying peroxides and as sensor of hydrogen peroxide-mediated signaling events. Might participate in the signaling cascades of growth factors and tumor necrosis factor-alpha by regulating the intracellular concentrations of H(2)O(2). This chain is Peroxiredoxin-2 (Prdx2), found in Mus musculus (Mouse).